The sequence spans 71 residues: MFTSKKPLLLLFFLGTINLSLCEQERDADEEERRDDPDERDVEVEKRFLPLIASLAANFVPKIFCKITKKC.

Positions 1 to 22 are cleaved as a signal peptide; it reads MFTSKKPLLLLFFLGTINLSLC. Residues 23–45 constitute a propeptide that is removed on maturation; that stretch reads EQERDADEEERRDDPDERDVEVE. Cys65 and Cys71 are joined by a disulfide.

Expressed by the skin glands.

The protein localises to the secreted. In terms of biological role, has antimicrobial activity against Gram-positive bacteria and fungi but has weak or no activity against a range of Gram-negative bacteria except P.faecalis. Active against the Gram-positive bacteria E.faecium 091299 (MIC=19 uM), E.faecalis 981 (MIC=19 uM), S.aureus ATCC 25923 (MIC=1.2 uM), S.carnosus KHS (MIC=4.8 uM), B.licheniformis X39 (MIC=2.4 uM) and R.rhodochrous X15 (MIC=1.2 uM). Active against the Gram-negative bacterium P.faecalis X29 (MIC=4.8 uM), is virtually inactive against E.coli ATCC 25922 (MIC=150 uM) and inactive against P.aeruginosa and S.typhi. Has antifungal activity against C.albicans ATCC 2002 (MIC=2.4 uM) and is also active against the slime mold 090223 (MIC=1.2 uM). Has low hemolytic activity against human erythrocytes (LC(50)=75 uM). The protein is Brevinin-1HN1 of Odorrana hainanensis (Odor frog).